An 804-amino-acid chain; its full sequence is QMQVFQMITKSQRIFSHAQVSKASSQLPAPEGKPAALRPLQGPWPQQLPPLAPAVDSLNAGPGNPEAEGSPARRRKTTPGVAREASPGNTRRDAKGGLKVAAVPTPLAAPSLDPSRNPDISSLAKQLRSSKGTLDLGDIFPSTGQRQTQLGGEELPGASLPGKQAPAENGAVSGTTKGEKGPPCSRGGGYRLLGNPRAPRFSGFRKEKAKMDMCCAASPSQVAMASFSSAGPPADPSKSKLTIFSRIQGGNIYRLPHPVKEENVAGGGNQQNGGSTDWTEPRSTFICKNCSQMFYTEKGLSSHMCFHSDQWPSPRGKQEPQVFGTEFCKPLRQVLRPEGDRHSPPGAKKPLDSTAAAPLVVPHSIPVVPVTRHVGSMAMEQEKDGEERDSKESSQQRKRKKRPPPKRLFIPPPPSTAGEPGPAGCHQSRLRSPMFLVDRLLKGLFQCSPYTPPPMLSPIREGSGVYFNTLCSTSTQASPDQLISSMLDQVDGSFGICVVKDDTKISIEPHINIGSRFQAEIPELQERSLAGIDEHVASLVWKPWGDMMINPETQDRVTELCNVACSSVMPGGGTNLELALHCLHEAQGNVQVALETLLLRGPHKPPTHLLADYRYTGSDVWTPIEKRLFKKAFYAHKKDFYLIHKTIQTKTVAQCVEYYYIWKKMIKFDCGRAPGLEKRVKREPEEVERTEEKVPCSPRERPSHHPIPELKIKTKSYRRESILSSSPNAGPKRTPEPSGSVESQGIFPCRECERVFDKIKSRNAHMKRHRLQDHVEPIVRVKWPVKPFQLKEEELGADIGPLQW.

2 disordered regions span residues 21–120 and 133–197; these read SKAS…NPDI and TLDL…GNPR. A C2H2-type 1 zinc finger spans residues 285–307; that stretch reads FICKNCSQMFYTEKGLSSHMCFH. Residues 379–426 form a disordered region; the sequence is MEQEKDGEERDSKESSQQRKRKKRPPPKRLFIPPPPSTAGEPGPAGCH. The span at 380–395 shows a compositional bias: basic and acidic residues; it reads EQEKDGEERDSKESSQ. Over residues 396 to 405 the composition is skewed to basic residues; that stretch reads QRKRKKRPPP. Positions 509 to 601 constitute an ELM2 domain; the sequence is PHINIGSRFQ…VALETLLLRG (93 aa). The region spanning 616–667 is the SANT domain; the sequence is TGSDVWTPIEKRLFKKAFYAHKKDFYLIHKTIQTKTVAQCVEYYYIWKKMIK. The interval 680–743 is disordered; the sequence is VKREPEEVER…TPEPSGSVES (64 aa). Residues 690–721 are compositionally biased toward basic and acidic residues; sequence TEEKVPCSPRERPSHHPIPELKIKTKSYRRES. The C2H2-type 2 zinc-finger motif lies at 747–769; the sequence is FPCRECERVFDKIKSRNAHMKRH.

Interacts with DNTTIP1. Identified in a complex with KCDT19, HDAC1 and HSPA2s. Component of a histone deacetylase complex containing DNTTIP1, ZNF541, HDAC1 and HDAC2. Identified in a complex with HDAC1, HDAC2, DNTTIP1 and KCTD19.

The protein localises to the nucleus. In terms of biological role, transcription regulator which is essential for male fertility and for the completion of meiotic prophase in spermatocytes. Regulates progression of the pachytene stage of meiotic prophase by activating the expression of genes involved in meiosis and post-meiosis during spermatogenesis. Maintains the repression of pre-pachytene transcriptional programs, including meiotic double-strand breaks (DSB) formation genes in pachytene spermatocytes and suppresses aberrant DSB formation after mid-pachytene, thus ensuring meiosis progression. The protein is Zinc finger protein 541 (ZNF541) of Macaca fascicularis (Crab-eating macaque).